A 313-amino-acid chain; its full sequence is Probable GTP 3',8-cyclase (313 aa).

In terms of domain architecture, Radical SAM core spans 4-224 (RFGRSIEDLR…EIRSKHYRPR (221 aa)). Arg-13 is a binding site for GTP. Cys-20, Cys-24, and Cys-27 together coordinate [4Fe-4S] cluster. Lys-60 contributes to the GTP binding site. Position 64 (Gly-64) interacts with S-adenosyl-L-methionine. GTP is bound at residue Thr-90. Ser-114 serves as a coordination point for S-adenosyl-L-methionine. Lys-151 is a GTP binding site. Positions 244 and 247 each coordinate [4Fe-4S] cluster. 249–251 (RIR) serves as a coordination point for GTP. Residue Cys-261 coordinates [4Fe-4S] cluster.

The protein belongs to the radical SAM superfamily. MoaA family. Requires [4Fe-4S] cluster as cofactor.

The catalysed reaction is GTP + AH2 + S-adenosyl-L-methionine = (8S)-3',8-cyclo-7,8-dihydroguanosine 5'-triphosphate + 5'-deoxyadenosine + L-methionine + A + H(+). It participates in cofactor biosynthesis; molybdopterin biosynthesis. Catalyzes the cyclization of GTP to (8S)-3',8-cyclo-7,8-dihydroguanosine 5'-triphosphate. The sequence is that of Probable GTP 3',8-cyclase from Sulfurisphaera tokodaii (strain DSM 16993 / JCM 10545 / NBRC 100140 / 7) (Sulfolobus tokodaii).